The sequence spans 266 residues: Glucosamine-6-phosphate deaminase (266 aa).

The Proton acceptor; for enolization step role is filled by Asp72. Asp141 (for ring-opening step) is an active-site residue. The active-site Proton acceptor; for ring-opening step is His143. Residue Glu148 is the For ring-opening step of the active site.

Belongs to the glucosamine/galactosamine-6-phosphate isomerase family. NagB subfamily. Homohexamer.

The catalysed reaction is alpha-D-glucosamine 6-phosphate + H2O = beta-D-fructose 6-phosphate + NH4(+). It participates in amino-sugar metabolism; N-acetylneuraminate degradation; D-fructose 6-phosphate from N-acetylneuraminate: step 5/5. Allosterically activated by N-acetylglucosamine 6-phosphate (GlcNAc6P). Catalyzes the reversible isomerization-deamination of glucosamine 6-phosphate (GlcN6P) to form fructose 6-phosphate (Fru6P) and ammonium ion. In Erwinia tasmaniensis (strain DSM 17950 / CFBP 7177 / CIP 109463 / NCPPB 4357 / Et1/99), this protein is Glucosamine-6-phosphate deaminase.